Reading from the N-terminus, the 216-residue chain is Guanylate kinase (216 aa).

The 179-residue stretch at 11-189 folds into the Guanylate kinase-like domain; sequence GVLIVISGPS…AVKKIEAILL (179 aa). 18-25 is a binding site for ATP; sequence GPSGAGKG.

It belongs to the guanylate kinase family.

The protein localises to the cytoplasm. The enzyme catalyses GMP + ATP = GDP + ADP. Its function is as follows. Essential for recycling GMP and indirectly, cGMP. The protein is Guanylate kinase of Clostridium perfringens (strain ATCC 13124 / DSM 756 / JCM 1290 / NCIMB 6125 / NCTC 8237 / Type A).